Reading from the N-terminus, the 397-residue chain is Serpin B10 (397 aa).

The interval 62–85 is disordered; it reads RDQGVKSSPESEKKRKMEFNSSNS. Positions 70–79 are enriched in basic and acidic residues; it reads PESEKKRKME. The Nuclear localization signal signature appears at 74–77; that stretch reads KKRK.

Belongs to the serpin family. Ov-serpin subfamily.

It localises to the nucleus. The protein localises to the cytoplasm. Protease inhibitor that may play a role in the regulation of protease activities during hematopoiesis and apoptosis induced by TNF. May regulate protease activities in the cytoplasm and in the nucleus. The protein is Serpin B10 (SERPINB10) of Papio anubis (Olive baboon).